We begin with the raw amino-acid sequence, 429 residues long: Glutamate-1-semialdehyde 2,1-aminomutase 2 (429 aa).

Position 268 is an N6-(pyridoxal phosphate)lysine (Lys-268).

It belongs to the class-III pyridoxal-phosphate-dependent aminotransferase family. HemL subfamily. In terms of assembly, homodimer. Requires pyridoxal 5'-phosphate as cofactor.

It is found in the cytoplasm. It carries out the reaction (S)-4-amino-5-oxopentanoate = 5-aminolevulinate. It participates in porphyrin-containing compound metabolism; protoporphyrin-IX biosynthesis; 5-aminolevulinate from L-glutamyl-tRNA(Glu): step 2/2. This Staphylococcus aureus (strain Mu50 / ATCC 700699) protein is Glutamate-1-semialdehyde 2,1-aminomutase 2.